The chain runs to 147 residues: Large ribosomal subunit protein uL13 (147 aa).

This sequence belongs to the universal ribosomal protein uL13 family. In terms of assembly, part of the 50S ribosomal subunit.

Its function is as follows. This protein is one of the early assembly proteins of the 50S ribosomal subunit, although it is not seen to bind rRNA by itself. It is important during the early stages of 50S assembly. In Kocuria rhizophila (strain ATCC 9341 / DSM 348 / NBRC 103217 / DC2201), this protein is Large ribosomal subunit protein uL13.